The chain runs to 455 residues: 12S seed storage protein CRB (455 aa).

The signal sequence occupies residues 1-24; it reads MGRVSSIISFSLTLLILFNGYTAQ. Intrachain disulfides connect C30–C63 and C106–C276. 2 Cupin type-1 domains span residues 35-229 and 282-431; these read LNAL…ETAQ and ENLD…EEAK. A Phosphothreonine modification is found at T109. Y299 carries the phosphotyrosine modification. 2 positions are modified to phosphoserine: S301 and S367. Phosphothreonine occurs at positions 395 and 420. A Phosphoserine modification is found at S436.

This sequence belongs to the 11S seed storage protein (globulins) family. Hexamer; each subunit is composed of an acidic and a basic chain derived from a single precursor and linked by a disulfide bond. Ubiquitinated. Post-translationally, proteolytically processed during seed maturation at a conserved Asn-Gly peptide bond by an asparaginyl endopeptidase to produce two mature polypeptides referred to as alpha and beta subunits that are joined together by a disulfide bond. In terms of processing, phosphorylated in seeds on some Tyr residues in response to abscisic acid (ABA). As to expression, accumulates in seeds 8 days after anthesis.

It is found in the protein storage vacuole. Functionally, seed storage protein. This chain is 12S seed storage protein CRB (CRB), found in Arabidopsis thaliana (Mouse-ear cress).